The following is a 198-amino-acid chain: Peptidyl-tRNA hydrolase (198 aa).

Tyr16 contacts tRNA. Residue His21 is the Proton acceptor of the active site. Phe67, Asn69, and Asn115 together coordinate tRNA.

It belongs to the PTH family. In terms of assembly, monomer.

The protein localises to the cytoplasm. The catalysed reaction is an N-acyl-L-alpha-aminoacyl-tRNA + H2O = an N-acyl-L-amino acid + a tRNA + H(+). Hydrolyzes ribosome-free peptidyl-tRNAs (with 1 or more amino acids incorporated), which drop off the ribosome during protein synthesis, or as a result of ribosome stalling. In terms of biological role, catalyzes the release of premature peptidyl moieties from peptidyl-tRNA molecules trapped in stalled 50S ribosomal subunits, and thus maintains levels of free tRNAs and 50S ribosomes. The sequence is that of Peptidyl-tRNA hydrolase from Prochlorococcus marinus (strain MIT 9301).